Reading from the N-terminus, the 313-residue chain is tRNA-cytidine(32) 2-sulfurtransferase (313 aa).

The PP-loop motif signature appears at 54 to 59 (SGGKDS). [4Fe-4S] cluster contacts are provided by Cys129, Cys132, and Cys220.

This sequence belongs to the TtcA family. In terms of assembly, homodimer. Mg(2+) serves as cofactor. It depends on [4Fe-4S] cluster as a cofactor.

Its subcellular location is the cytoplasm. It carries out the reaction cytidine(32) in tRNA + S-sulfanyl-L-cysteinyl-[cysteine desulfurase] + AH2 + ATP = 2-thiocytidine(32) in tRNA + L-cysteinyl-[cysteine desulfurase] + A + AMP + diphosphate + H(+). The protein operates within tRNA modification. Functionally, catalyzes the ATP-dependent 2-thiolation of cytidine in position 32 of tRNA, to form 2-thiocytidine (s(2)C32). The sulfur atoms are provided by the cysteine/cysteine desulfurase (IscS) system. The protein is tRNA-cytidine(32) 2-sulfurtransferase of Methylibium petroleiphilum (strain ATCC BAA-1232 / LMG 22953 / PM1).